The chain runs to 296 residues: NAD kinase (296 aa).

Residue Asp-72 is the Proton acceptor of the active site. Residues 72-73, 146-147, Arg-157, Lys-174, Asp-176, 187-192, and Gln-247 each bind NAD(+); these read DG, ND, and TAYALS.

Belongs to the NAD kinase family. Requires a divalent metal cation as cofactor.

It localises to the cytoplasm. It carries out the reaction NAD(+) + ATP = ADP + NADP(+) + H(+). Functionally, involved in the regulation of the intracellular balance of NAD and NADP, and is a key enzyme in the biosynthesis of NADP. Catalyzes specifically the phosphorylation on 2'-hydroxyl of the adenosine moiety of NAD to yield NADP. This Pseudomonas fluorescens (strain ATCC BAA-477 / NRRL B-23932 / Pf-5) protein is NAD kinase.